The following is a 177-amino-acid chain: Disulfide bond formation protein B (177 aa).

Over methionine 1–valine 14 the chain is Cytoplasmic. A helical membrane pass occupies residues tryptophan 15–tyrosine 31. At phenylalanine 32–leucine 49 the chain is on the periplasmic side. Cysteine 41 and cysteine 44 are joined by a disulfide. A helical transmembrane segment spans residues alanine 50–proline 65. Residues leucine 66–leucine 72 are Cytoplasmic-facing. A helical membrane pass occupies residues isoleucine 73–phenylalanine 90. The Periplasmic portion of the chain corresponds to arginine 91–glutamine 145. Cysteine 105 and cysteine 131 form a disulfide bridge. A helical membrane pass occupies residues tryptophan 146–alanine 164. At glutamine 165 to asparagine 177 the chain is on the cytoplasmic side.

The protein belongs to the DsbB family.

The protein localises to the cell inner membrane. In terms of biological role, required for disulfide bond formation in some periplasmic proteins. Acts by oxidizing the DsbA protein. This is Disulfide bond formation protein B from Haemophilus influenzae (strain 86-028NP).